Consider the following 325-residue polypeptide: Lipid droplet-associated hydrolase (325 aa).

Serine 139 serves as the catalytic Nucleophile. Catalysis depends on charge relay system residues aspartate 271 and histidine 300.

Belongs to the AB hydrolase superfamily. LDAH family. In terms of tissue distribution, present in macrophage-rich areas in atherosclerotic lesions (at protein level). Expressed in monocytes and monocyte-derived macrophages (at protein level).

The protein localises to the lipid droplet. It localises to the endoplasmic reticulum. The catalysed reaction is a cholesterol ester + H2O = cholesterol + a fatty acid + H(+). Functionally, probable serine lipid hydrolase associated with lipid droplets. Has low cholesterol esterase activity. Appears to lack triglyceride lipase activity. Involved in cholesterol and triglyceride homeostasis; has opposing effects, stimulating cellular triglyceride accumulation and cellular cholesterol release. Acts antagonistically with PNPLA2/ATGL in regulation of cellular lipid stores. May regulate triglyceride accumulation indirectly through stimulation of PNPLA2/ATGL ubiquitination and proteasomal degradation. Promotes microtubule-dependent lipid droplet fusion. Highly expressed in macrophage-rich areas in atherosclerotic lesions, suggesting that it could promote cholesterol ester turnover in macrophages. In Homo sapiens (Human), this protein is Lipid droplet-associated hydrolase.